The primary structure comprises 94 residues: Large ribosomal subunit protein bL28 (94 aa).

The tract at residues 1-21 (MARRCEVTGRGTVSGNNVSHS) is disordered. The span at 11–20 (GTVSGNNVSH) shows a compositional bias: polar residues.

It belongs to the bacterial ribosomal protein bL28 family.

The protein is Large ribosomal subunit protein bL28 of Leptospira interrogans serogroup Icterohaemorrhagiae serovar copenhageni (strain Fiocruz L1-130).